Here is an 834-residue protein sequence, read N- to C-terminus: Protein ROOT HAIR DEFECTIVE 3 homolog 2 (834 aa).

Residues 1–683 are Cytoplasmic-facing; it reads MGENDDGCST…EAHKRNNNWL (683 aa). The 216-residue stretch at 37–252 folds into the GB1/RHD3-type G domain; sequence GLSYAVVAIM…ISPGGLAGDR (216 aa). 47–54 is a GTP binding site; sequence GPQSSGKS. Residues 214–241 are a coiled coil; the sequence is MIVALSSYEEKEKQFEQEVAELRQRFFH. The helical transmembrane segment at 684–704 threads the bilayer; the sequence is PPAWAIVLMIVLGFNEFMMLL. Over 705 to 707 the chain is Lumenal; it reads KNP. The chain crosses the membrane as a helical span at residues 708-728; it reads LYLLGFFVAFLLSKALWVQLD. Residues 729-834 are Cytoplasmic-facing; that stretch reads IPREFQHGAV…NVQESEISQM (106 aa). Polar residues predominate over residues 767-783; the sequence is TTQEVPDLSASQTYRQQ. Residues 767–834 form a disordered region; the sequence is TTQEVPDLSA…NVQESEISQM (68 aa). The segment covering 784–803 has biased composition (low complexity); the sequence is SPSHSISSTISESVASNISS. A compositionally biased stretch (polar residues) spans 823 to 834; it reads TNNVQESEISQM.

The protein belongs to the TRAFAC class dynamin-like GTPase superfamily. GB1/RHD3 GTPase family. RHD3 subfamily. Expressed in roots, leaves, stems and flowers.

It is found in the endoplasmic reticulum membrane. Its function is as follows. Probable GTP-binding protein that may be involved in cell development. The polypeptide is Protein ROOT HAIR DEFECTIVE 3 homolog 2 (Arabidopsis thaliana (Mouse-ear cress)).